The sequence spans 488 residues: Glutamyl-tRNA(Gln) amidotransferase subunit A (488 aa).

Residues lysine 76 and serine 151 each act as charge relay system in the active site. Catalysis depends on serine 175, which acts as the Acyl-ester intermediate.

Belongs to the amidase family. GatA subfamily. As to quaternary structure, heterotrimer of A, B and C subunits.

The catalysed reaction is L-glutamyl-tRNA(Gln) + L-glutamine + ATP + H2O = L-glutaminyl-tRNA(Gln) + L-glutamate + ADP + phosphate + H(+). In terms of biological role, allows the formation of correctly charged Gln-tRNA(Gln) through the transamidation of misacylated Glu-tRNA(Gln) in organisms which lack glutaminyl-tRNA synthetase. The reaction takes place in the presence of glutamine and ATP through an activated gamma-phospho-Glu-tRNA(Gln). The protein is Glutamyl-tRNA(Gln) amidotransferase subunit A of Symbiobacterium thermophilum (strain DSM 24528 / JCM 14929 / IAM 14863 / T).